The primary structure comprises 239 residues: ATP synthase subunit b (239 aa).

Positions 1–22 are enriched in low complexity; sequence MYAQEAQQKPEAQQSAPAAEQP. Residues 1–64 are disordered; that stretch reads MYAQEAQQKP…GEEEAGEHME (64 aa). Basic and acidic residues-rich tracts occupy residues 23–33 and 45–64; these read KPAEEQAKPEQ and ELSEASHAAEGEEEAGEHME. Residues 85-105 traverse the membrane as a helical segment; it reads SYWIAMAFNFAIVFALLGWAM.

This sequence belongs to the ATPase B chain family. As to quaternary structure, F-type ATPases have 2 components, F(1) - the catalytic core - and F(0) - the membrane proton channel. F(1) has five subunits: alpha(3), beta(3), gamma(1), delta(1), epsilon(1). F(0) has three main subunits: a(1), b(2) and c(10-14). The alpha and beta chains form an alternating ring which encloses part of the gamma chain. F(1) is attached to F(0) by a central stalk formed by the gamma and epsilon chains, while a peripheral stalk is formed by the delta and b chains.

It localises to the cell inner membrane. F(1)F(0) ATP synthase produces ATP from ADP in the presence of a proton or sodium gradient. F-type ATPases consist of two structural domains, F(1) containing the extramembraneous catalytic core and F(0) containing the membrane proton channel, linked together by a central stalk and a peripheral stalk. During catalysis, ATP synthesis in the catalytic domain of F(1) is coupled via a rotary mechanism of the central stalk subunits to proton translocation. In terms of biological role, component of the F(0) channel, it forms part of the peripheral stalk, linking F(1) to F(0). In Koribacter versatilis (strain Ellin345), this protein is ATP synthase subunit b.